The following is a 185-amino-acid chain: Ribosome-recycling factor (185 aa).

It belongs to the RRF family.

It is found in the cytoplasm. In terms of biological role, responsible for the release of ribosomes from messenger RNA at the termination of protein biosynthesis. May increase the efficiency of translation by recycling ribosomes from one round of translation to another. The protein is Ribosome-recycling factor of Mycobacteroides abscessus (strain ATCC 19977 / DSM 44196 / CCUG 20993 / CIP 104536 / JCM 13569 / NCTC 13031 / TMC 1543 / L948) (Mycobacterium abscessus).